A 198-amino-acid polypeptide reads, in one-letter code: T-cell surface glycoprotein CD3 epsilon chain (198 aa).

The signal sequence occupies residues 1–21 (MQSGTRWRVLGLCLLSIGVWG). The Extracellular portion of the chain corresponds to 22–117 (QDGNEEMGSI…RVCENCMEMD (96 aa)). The Ig-like domain maps to 37–107 (QVSISGTTVI…DASHHLYLKA (71 aa)). The cysteines at positions 49 and 89 are disulfide-linked. The chain crosses the membrane as a helical span at residues 118-138 (VMAVATIVIVDICITLGLLLL). At 139-198 (VYYWSKNRKAKAKPVTRGAGAGGRQRGQNKERPPPVPNPDYEPIRKGQQDLYSGLNQRRI) the chain is on the cytoplasmic side. The segment at 152-198 (PVTRGAGAGGRQRGQNKERPPPVPNPDYEPIRKGQQDLYSGLNQRRI) is disordered. The segment at 166-183 (QNKERPPPVPNPDYEPIR) is NUMB-binding region. The region spanning 169–196 (ERPPPVPNPDYEPIRKGQQDLYSGLNQR) is the ITAM domain. Positions 170-177 (RPPPVPNP) are proline-rich sequence. Tyr179 and Tyr190 each carry phosphotyrosine. Residues 188 to 198 (DLYSGLNQRRI) show a composition bias toward polar residues.

In terms of assembly, the TCR-CD3 complex is composed of a CD3D/CD3E and a CD3G/CD3E heterodimers that preferentially associate with TCRalpha and TCRbeta, respectively, to form TCRalpha/CD3E/CD3G and TCRbeta/CD3G/CD3E trimers. In turn, the hexamer interacts with CD3Z homodimer to form the TCR-CD3 complex. Alternatively, TCRalpha and TCRbeta can be replaced by TCRgamma and TCRdelta. Interacts with CD6. Interacts (via Proline-rich sequence) with NCK1; the interaction is ligand dependent but independent of tyrosine kinase activation. In terms of processing, phosphorylated on Tyr residues after T-cell receptor triggering by LCK in association with CD4/CD8.

It is found in the cell membrane. Part of the TCR-CD3 complex present on T-lymphocyte cell surface that plays an essential role in adaptive immune response. When antigen presenting cells (APCs) activate T-cell receptor (TCR), TCR-mediated signals are transmitted across the cell membrane by the CD3 chains CD3D, CD3E, CD3G and CD3Z. All CD3 chains contain immunoreceptor tyrosine-based activation motifs (ITAMs) in their cytoplasmic domain. Upon TCR engagement, these motifs become phosphorylated by Src family protein tyrosine kinases LCK and FYN, resulting in the activation of downstream signaling pathways. In addition of this role of signal transduction in T-cell activation, CD3E plays an essential role in correct T-cell development. Also participates in internalization and cell surface down-regulation of TCR-CD3 complexes via endocytosis sequences present in CD3E cytosolic region. In addition to its role as a TCR coreceptor, it serves as a receptor for ITPRIPL1. Ligand recognition inhibits T-cell activation by promoting interaction with NCK1, which prevents CD3E-ZAP70 interaction and blocks the ERK-NFkB signaling cascade and calcium influx. The polypeptide is T-cell surface glycoprotein CD3 epsilon chain (CD3E) (Macaca fascicularis (Crab-eating macaque)).